The primary structure comprises 229 residues: General odorant-binding protein 69 (229 aa).

The first 20 residues, 1–20, serve as a signal peptide directing secretion; it reads MDRLLLVLLSSASLLLTVYG. The cysteines at positions 66 and 106 are disulfide-linked.

The protein belongs to the PBP/GOBP family.

The protein localises to the secreted. In terms of biological role, present in the aqueous fluid surrounding olfactory sensory dendrites and are thought to aid in the capture and transport of hydrophobic odorants into and through this fluid. The chain is General odorant-binding protein 69 (Obp69) from Anopheles gambiae (African malaria mosquito).